The sequence spans 210 residues: MKGGLLVDDEFIHGEERSLTVRKTSLFFAGDGFTVYDCKGSLVFRVDSYGGPNTRDTDEVVLMDAHGRCLLTLRRKRPSLRRRWEGYLGERSDGQKPIFGVRRSSIIGRNSVTVEVYGDYQCSEYLIEGSFGARNCTVVEAETRRKVAEIRRKVDASTNVMLGKDVFSLNVKPGFDGAFAMGLVLVLDQIYGDDLLEVGEEQVHPSAEDL.

The protein belongs to the LOR family.

Its function is as follows. Might be related to the phospholipid scramblase and tubby-like superfamily of membrane tethered transcription factors. The sequence is that of Protein LURP-one-related 5 from Arabidopsis thaliana (Mouse-ear cress).